Here is a 510-residue protein sequence, read N- to C-terminus: Major facilitator superfamily domain-containing protein 8 (510 aa).

The Cytoplasmic segment spans residues 1-38 (MASIDDDDDERTPLLQDSHIGELVETQKQLKSRWWSIR). The Dileucine internalization motif motif lies at 14–15 (LL). The chain crosses the membrane as a helical span at residues 39–59 (VMYLTMFLSSVGFSIVMTSIW). Residues 60 to 72 (PYLQKVDQSADAS) lie on the Extracellular side of the membrane. The helical transmembrane segment at 73–93 (FLGWVIASFSLGQMVASPLFG) threads the bilayer. At 94 to 103 (LWSNHRPRRE) the chain is on the cytoplasmic side. A helical transmembrane segment spans residues 104–124 (PLVVSITILVAASCLYAYVHV). Residues 125–132 (PASHNKYY) are Extracellular-facing. A helical membrane pass occupies residues 133–155 (MLLARTFVGFGSGNVAVVRSYVA). The Cytoplasmic portion of the chain corresponds to 156–171 (GATSLSERTGAMANIS). Residues 172–192 (AFQAMGFILGPAFQAALSVIG) traverse the membrane as a helical segment. Over 193 to 209 (ETGITINGISLQVNMYT) the chain is Extracellular. A helical transmembrane segment spans residues 210–230 (APALMGALLGIGNIILIFAIF). Topologically, residues 231–264 (REHRVDDLEKNVSSINSESEVTDVEKANEGPIDQ) are cytoplasmic. The helical transmembrane segment at 265–285 (IAVISSNILFFVVLFVFAIFE) threads the bilayer. The Extracellular portion of the chain corresponds to 286 to 302 (TISTPLTMDMYAWTRTQ). A helical membrane pass occupies residues 303–323 (AVFYNGIILAAVGVESVIVFL). Residues 324–335 (TVKILCKKTGER) are Cytoplasmic-facing. Residues 336–356 (VLLLGGLAVIWIGFFILLPWG) form a helical membrane-spanning segment. Residues 357–406 (NQMPKIQWTDLQNATIHNTTQWTSSIPSSGNHSVEPTGCPVIQTWCLYTP) lie on the Extracellular side of the membrane. 2 N-linked (GlcNAc...) asparagine glycosylation sites follow: asparagine 369 and asparagine 374. A helical transmembrane segment spans residues 407–427 (VIHLAQYLTSDILIGVGYPIC). Residues 428-445 (NVMSYTLYSKIIGPKPQG) lie on the Cytoplasmic side of the membrane. Residues 446–466 (LYMGWLTAAGSAARTLGPVFV) traverse the membrane as a helical segment. The Extracellular portion of the chain corresponds to 467-476 (SQIYTHLGTR). A helical membrane pass occupies residues 477–497 (WTFGIICAFVALSLLHLTAVY). At 498-510 (KRLIPFSTRYERL) the chain is on the cytoplasmic side.

It belongs to the major facilitator superfamily.

It is found in the lysosome membrane. May be a carrier that transport small solutes by using chemiosmotic ion gradients. This Xenopus laevis (African clawed frog) protein is Major facilitator superfamily domain-containing protein 8 (mfsd8).